A 302-amino-acid polypeptide reads, in one-letter code: Nitric oxide synthase-interacting protein (302 aa).

Residue Ser36 is modified to Phosphoserine. Positions 55 to 75 are U-box-like; that stretch reads DPVVTPDGYLYEREAILEYIL. The Nuclear localization signal motif lies at 78–101; sequence KKEIARQMKAYEKQRGARREEQKE. The segment at 126–156 is disordered; sequence LNPFTPKAASAGNGPDDAQPGSSAGPAGKDK.

Belongs to the NOSIP family. In terms of assembly, interacts with NOS1 and NOS3. Interacts with PP2A holoenzyme, containing PPP2CA, PPP2CB, PPP2R1A and PPP2R2A subunits.

Its subcellular location is the cytoplasm. The protein resides in the nucleus. It catalyses the reaction S-ubiquitinyl-[E2 ubiquitin-conjugating enzyme]-L-cysteine + [acceptor protein]-L-lysine = [E2 ubiquitin-conjugating enzyme]-L-cysteine + N(6)-ubiquitinyl-[acceptor protein]-L-lysine.. E3 ubiquitin-protein ligase that is essential for proper development of the forebrain, the eye, and the face. Catalyzes monoubiquitination of serine/threonine-protein phosphatase 2A (PP2A) catalytic subunit PPP2CA/PPP2CB. Negatively regulates nitric oxide production by inducing NOS1 and NOS3 translocation to actin cytoskeleton and inhibiting their enzymatic activity. The sequence is that of Nitric oxide synthase-interacting protein (NOSIP) from Bos taurus (Bovine).